A 135-amino-acid chain; its full sequence is MRLSFIIFAISLLAGGSGAAEALHPASDVLTLRGTNQGASTGKRSLRYDNNAERAGEEDDEERAFPGAEELSRLANLAHTSKADSLGTSLKNFFKQLDKANVNPSNIHKYGFSGEEFDQLRKRFGTWYRHYKDIE.

The N-terminal stretch at M1–A19 is a signal peptide. Polar residues predominate over residues G34–K43. The segment at G34–A64 is disordered. A RxLR-dEER motif is present at residues R44–R63. The span at L46–A55 shows a compositional bias: basic and acidic residues.

The protein belongs to the RxLR effector family.

It is found in the secreted. The protein localises to the host nucleus. Its subcellular location is the host cytoplasm. In terms of biological role, secreted effector that acts as an elicitor of hypersensitive response (HR) specifically on plants carrying defense protein R10. Enhances P.infestans colonization of Nicotiana benthamiana leaves. The chain is RxLR effector protein Avr10 from Phytophthora infestans (strain T30-4) (Potato late blight agent).